The sequence spans 515 residues: Protein FAM98A (515 aa).

Disordered regions lie at residues 297-410 (VLMG…GYHG) and 432-515 (SGYQ…HYTS). The span at 302-311 (VPDRGGRPNE) shows a compositional bias: basic and acidic residues. Residues 382–394 (WTDGGSGSGGGYQ) are compositionally biased toward gly residues. The span at 444 to 456 (RYQDGGHHGERGS) shows a compositional bias: basic and acidic residues. Gly residues predominate over residues 457 to 481 (GRGGRGGRGGRGGRGSQGGGWGGRG). Over residues 485 to 501 (YHQGGQFEQHFQHGGYQ) the composition is skewed to low complexity. Over residues 502–515 (YSHSGFGQGRHYTS) the composition is skewed to polar residues.

Belongs to the FAM98 family. In terms of assembly, interacts (via N- and C-terminus) with DDX1. Interacts (via N- and C-terminus) with C14orf166. Interacts with FAM98B. Interacts with PLEKHM1 (via N- and C-terminus).

In terms of biological role, positively stimulates PRMT1-induced protein arginine methylation. Involved in skeletal homeostasis. Positively regulates lysosome peripheral distribution and ruffled border formation in osteoclasts. This Mus musculus (Mouse) protein is Protein FAM98A.